The primary structure comprises 177 residues: CDP-archaeol synthase (177 aa).

5 helical membrane passes run 6-26 (LFAS…ACIF), 54-74 (CIFG…LVDF), 90-110 (VILA…GSFI), 124-144 (LLDQ…VAPI), and 148-168 (MIII…IIAY).

This sequence belongs to the CDP-archaeol synthase family. Mg(2+) serves as cofactor.

The protein localises to the cell membrane. The enzyme catalyses 2,3-bis-O-(geranylgeranyl)-sn-glycerol 1-phosphate + CTP + H(+) = CDP-2,3-bis-O-(geranylgeranyl)-sn-glycerol + diphosphate. It functions in the pathway membrane lipid metabolism; glycerophospholipid metabolism. Catalyzes the formation of CDP-2,3-bis-(O-geranylgeranyl)-sn-glycerol (CDP-archaeol) from 2,3-bis-(O-geranylgeranyl)-sn-glycerol 1-phosphate (DGGGP) and CTP. This reaction is the third ether-bond-formation step in the biosynthesis of archaeal membrane lipids. The protein is CDP-archaeol synthase of Methanocaldococcus jannaschii (strain ATCC 43067 / DSM 2661 / JAL-1 / JCM 10045 / NBRC 100440) (Methanococcus jannaschii).